The chain runs to 459 residues: Putrescine aminotransferase (459 aa).

Pyridoxal 5'-phosphate contacts are provided by residues glycine 150–threonine 151 and glutamine 274. Lysine 300 is modified (N6-(pyridoxal phosphate)lysine). Residue threonine 332 participates in pyridoxal 5'-phosphate binding.

The protein belongs to the class-III pyridoxal-phosphate-dependent aminotransferase family. Putrescine aminotransferase subfamily. Pyridoxal 5'-phosphate is required as a cofactor.

The catalysed reaction is an alkane-alpha,omega-diamine + 2-oxoglutarate = an omega-aminoaldehyde + L-glutamate. It catalyses the reaction putrescine + 2-oxoglutarate = 1-pyrroline + L-glutamate + H2O. The enzyme catalyses cadaverine + 2-oxoglutarate = 5-aminopentanal + L-glutamate. It participates in amine and polyamine degradation; putrescine degradation; 4-aminobutanal from putrescine (transaminase route): step 1/1. Its function is as follows. Catalyzes the aminotransferase reaction from putrescine to 2-oxoglutarate, leading to glutamate and 4-aminobutanal, which spontaneously cyclizes to form 1-pyrroline. This is the first step in one of two pathways for putrescine degradation, where putrescine is converted into 4-aminobutanoate (gamma-aminobutyrate or GABA) via 4-aminobutanal. Also functions as a cadaverine transaminase in a a L-lysine degradation pathway to succinate that proceeds via cadaverine, glutarate and L-2-hydroxyglutarate. The protein is Putrescine aminotransferase of Escherichia fergusonii (strain ATCC 35469 / DSM 13698 / CCUG 18766 / IAM 14443 / JCM 21226 / LMG 7866 / NBRC 102419 / NCTC 12128 / CDC 0568-73).